Reading from the N-terminus, the 255-residue chain is Imidazole glycerol phosphate synthase subunit HisF (255 aa).

Active-site residues include aspartate 12 and aspartate 131.

This sequence belongs to the HisA/HisF family. As to quaternary structure, heterodimer of HisH and HisF.

Its subcellular location is the cytoplasm. The enzyme catalyses 5-[(5-phospho-1-deoxy-D-ribulos-1-ylimino)methylamino]-1-(5-phospho-beta-D-ribosyl)imidazole-4-carboxamide + L-glutamine = D-erythro-1-(imidazol-4-yl)glycerol 3-phosphate + 5-amino-1-(5-phospho-beta-D-ribosyl)imidazole-4-carboxamide + L-glutamate + H(+). It participates in amino-acid biosynthesis; L-histidine biosynthesis; L-histidine from 5-phospho-alpha-D-ribose 1-diphosphate: step 5/9. Its function is as follows. IGPS catalyzes the conversion of PRFAR and glutamine to IGP, AICAR and glutamate. The HisF subunit catalyzes the cyclization activity that produces IGP and AICAR from PRFAR using the ammonia provided by the HisH subunit. This Neisseria meningitidis serogroup C / serotype 2a (strain ATCC 700532 / DSM 15464 / FAM18) protein is Imidazole glycerol phosphate synthase subunit HisF.